The following is a 216-amino-acid chain: Probable succinyl-CoA:3-ketoacid coenzyme A transferase subunit B (216 aa).

Residue Glu-47 is part of the active site.

The protein belongs to the 3-oxoacid CoA-transferase subunit B family. As to quaternary structure, heterodimer of a subunit A and a subunit B.

It catalyses the reaction a 3-oxo acid + succinyl-CoA = a 3-oxoacyl-CoA + succinate. This chain is Probable succinyl-CoA:3-ketoacid coenzyme A transferase subunit B (scoB), found in Bacillus subtilis (strain 168).